Consider the following 150-residue polypeptide: C-type lectin 37Db (150 aa).

The N-terminal stretch at 1–20 is a signal peptide; sequence MMVKLLLLFLVCWSALPLES. Positions 31 to 148 constitute a C-type lectin domain; the sequence is IGEKQYYISL…CYSSVAFICQ (118 aa). 2 cysteine pairs are disulfide-bonded: C52–C147 and C122–C139. Residues N107 and N115 are each glycosylated (N-linked (GlcNAc...) asparagine).

The protein resides in the secreted. Its function is as follows. Galactose-specific lectin that displays calcium-dependent activity. Binds to the surface of hemocytes and enhances hemocyte encapsulation and melanization. This is likely by interacting with carbohydrates on the surface of the hemocytes. Also displays agglutination activity against the Gram-negative bacterium E.coli. This is C-type lectin 37Db from Drosophila melanogaster (Fruit fly).